The primary structure comprises 326 residues: E3 ubiquitin-protein ligase SINAT3 (326 aa).

The disordered stretch occupies residues 1 to 44 (MDLDSMDCTSTMDVTDDEEIHQDRHSYASVSKHHHTNNNTTNVN). An RING-type zinc finger spans residues 63-99 (CPVCTNSMYPPIHQCHNGHTLCSTCKARVHNRCPTCR). The tract at residues 113–306 (VAESLELPCK…KELKLRVTGR (194 aa)) is SBD. The segment at 116–176 (SLELPCKHMS…LVAHLRDDHK (61 aa)) adopts an SIAH-type zinc-finger fold. 8 residues coordinate Zn(2+): C121, C128, H140, C144, C151, C158, H170, and H175.

This sequence belongs to the SINA (Seven in absentia) family. As to quaternary structure, interacts with SINAT6. Interacts with WAV3. Interacts with FREE1. Interacts with ELC/VPS23A.

The protein localises to the endosome. Its subcellular location is the multivesicular body. The protein resides in the cytoplasmic vesicle. It is found in the autophagosome. It catalyses the reaction S-ubiquitinyl-[E2 ubiquitin-conjugating enzyme]-L-cysteine + [acceptor protein]-L-lysine = [E2 ubiquitin-conjugating enzyme]-L-cysteine + N(6)-ubiquitinyl-[acceptor protein]-L-lysine.. Its pathway is protein modification; protein ubiquitination. E3 ubiquitin-protein ligase that mediates ubiquitination and subsequent proteasomal degradation of target proteins. E3 ubiquitin ligases accept ubiquitin from an E2 ubiquitin-conjugating enzyme in the form of a thioester and then directly transfers the ubiquitin to targeted substrates. It probably triggers the ubiquitin-mediated degradation of different substrates. Modulates directly the ubiquitination and proteasomal-dependent degradation of FREE1, a component of the ESCRT-I complex. Modulates directly the ubiquitination and proteasomal-dependent degradation of ELC/VPS23A, a component of the ESCRT-I complex. The protein is E3 ubiquitin-protein ligase SINAT3 of Arabidopsis thaliana (Mouse-ear cress).